We begin with the raw amino-acid sequence, 438 residues long: Adenylyltransferase and sulfurtransferase UBA4 (438 aa).

Residues Gly-81, Asp-102, Ser-109–Arg-113, Lys-126, and Asp-170–His-171 each bind ATP. Zn(2+)-binding residues include Cys-212 and Cys-215. The active-site Glycyl thioester intermediate; for adenylyltransferase activity is Cys-229. Positions 290 and 293 each coordinate Zn(2+). One can recognise a Rhodanese domain in the interval Asn-340–Pro-436. Cys-396 (cysteine persulfide intermediate; for sulfurtransferase activity) is an active-site residue.

This sequence in the N-terminal section; belongs to the HesA/MoeB/ThiF family. UBA4 subfamily. The cofactor is Zn(2+).

Its subcellular location is the cytoplasm. It localises to the cytosol. Its pathway is tRNA modification; 5-methoxycarbonylmethyl-2-thiouridine-tRNA biosynthesis. Its function is as follows. Plays a central role in 2-thiolation of mcm(5)S(2)U at tRNA wobble positions of cytosolic tRNA(Lys), tRNA(Glu) and tRNA(Gln). Acts by mediating the C-terminal thiocarboxylation of sulfur carrier URM1. Its N-terminus first activates URM1 as acyl-adenylate (-COAMP), then the persulfide sulfur on the catalytic cysteine is transferred to URM1 to form thiocarboxylation (-COSH) of its C-terminus. The reaction probably involves hydrogen sulfide that is generated from the persulfide intermediate and that acts as a nucleophile towards URM1. Subsequently, a transient disulfide bond is formed. Does not use thiosulfate as sulfur donor; NFS1 probably acting as a sulfur donor for thiocarboxylation reactions. Prior mcm(5) tRNA modification by the elongator complex is required for 2-thiolation. May also be involved in protein urmylation. This is Adenylyltransferase and sulfurtransferase UBA4 from Candida albicans (strain SC5314 / ATCC MYA-2876) (Yeast).